The sequence spans 78 residues: Small ribosomal subunit protein bS18 (78 aa).

Belongs to the bacterial ribosomal protein bS18 family. As to quaternary structure, part of the 30S ribosomal subunit. Forms a tight heterodimer with protein bS6.

Functionally, binds as a heterodimer with protein bS6 to the central domain of the 16S rRNA, where it helps stabilize the platform of the 30S subunit. This Geobacillus sp. (strain WCH70) protein is Small ribosomal subunit protein bS18.